The chain runs to 399 residues: Imidazolonepropionase (399 aa).

A compositionally biased stretch (polar residues) spans 1-13; the sequence is MSETLYTGISQLA. The tract at residues 1–20 is disordered; sequence MSETLYTGISQLATPRPGPQ. Residues histidine 74 and histidine 76 each contribute to the Fe(3+) site. 2 residues coordinate Zn(2+): histidine 74 and histidine 76. 4-imidazolone-5-propanoate-binding residues include arginine 83, tyrosine 146, and histidine 176. Tyrosine 146 lines the N-formimidoyl-L-glutamate pocket. Histidine 238 contributes to the Fe(3+) binding site. Position 238 (histidine 238) interacts with Zn(2+). Glutamine 241 serves as a coordination point for 4-imidazolone-5-propanoate. Residue aspartate 312 participates in Fe(3+) binding. Residue aspartate 312 coordinates Zn(2+). N-formimidoyl-L-glutamate-binding residues include asparagine 314 and glycine 316. A 4-imidazolone-5-propanoate-binding site is contributed by serine 317.

Belongs to the metallo-dependent hydrolases superfamily. HutI family. It depends on Zn(2+) as a cofactor. Fe(3+) is required as a cofactor.

The protein resides in the cytoplasm. It catalyses the reaction 4-imidazolone-5-propanoate + H2O = N-formimidoyl-L-glutamate. It functions in the pathway amino-acid degradation; L-histidine degradation into L-glutamate; N-formimidoyl-L-glutamate from L-histidine: step 3/3. Catalyzes the hydrolytic cleavage of the carbon-nitrogen bond in imidazolone-5-propanoate to yield N-formimidoyl-L-glutamate. It is the third step in the universal histidine degradation pathway. The polypeptide is Imidazolonepropionase (Deinococcus radiodurans (strain ATCC 13939 / DSM 20539 / JCM 16871 / CCUG 27074 / LMG 4051 / NBRC 15346 / NCIMB 9279 / VKM B-1422 / R1)).